The chain runs to 296 residues: MQINLITGISGSGKSVALRAFEDAGYDCVDNLPVSLLVNLIITLEKEQCERVAVAIDARRGQSIADLPSTLENLRKSHQVRIVFLNADTNTLIQRFSETRRRHPLSTNAKQPQSATLIEAIDKERNLLEPLRAQAHSIDTSNIPAHALRSWIQDLLKDKPIGLTVVFESFGFKKGVPSEANLVFDVRCLPNPHYDKVLRPLTGNDKPVKEFLEKIPEVVNMEADITQFIHRWLPHYIADGRSYLTVAIGCTGGQHRSVYLVNRLSEYFRKQKDFGILQLNFLDRHRELDSIPVAKS.

An ATP-binding site is contributed by 8 to 15 (GISGSGKS). Residue 57 to 60 (DARR) participates in GTP binding.

It belongs to the RapZ-like family.

Functionally, displays ATPase and GTPase activities. This Polynucleobacter necessarius subsp. necessarius (strain STIR1) protein is Nucleotide-binding protein Pnec_1620.